A 444-amino-acid polypeptide reads, in one-letter code: Aspartate--tRNA(Asp/Asn) ligase (444 aa).

Glu176 is an L-aspartate binding site. Residues 198–201 (QLFK) are aspartate. Arg220 provides a ligand contact to L-aspartate. ATP contacts are provided by residues 220 to 222 (RAE), 228 to 230 (RHL), and Glu367. Glu367 and Ser370 together coordinate Mg(2+). The L-aspartate site is built by Ser370 and Arg374. ATP is bound at residue 415 to 418 (GCER).

Belongs to the class-II aminoacyl-tRNA synthetase family. Type 2 subfamily. As to quaternary structure, homodimer. The cofactor is Mg(2+).

It localises to the cytoplasm. The enzyme catalyses tRNA(Asx) + L-aspartate + ATP = L-aspartyl-tRNA(Asx) + AMP + diphosphate. Functionally, aspartyl-tRNA synthetase with relaxed tRNA specificity since it is able to aspartylate not only its cognate tRNA(Asp) but also tRNA(Asn). Reaction proceeds in two steps: L-aspartate is first activated by ATP to form Asp-AMP and then transferred to the acceptor end of tRNA(Asp/Asn). The polypeptide is Aspartate--tRNA(Asp/Asn) ligase (Methanosarcina acetivorans (strain ATCC 35395 / DSM 2834 / JCM 12185 / C2A)).